The primary structure comprises 196 residues: uncharacterized protein (196 aa).

The N-terminal stretch at 1–27 (MSVLSRAVQLAFVALGLCLFFSNLVAA) is a signal peptide.

The protein localises to the secreted. This is an uncharacterized protein from Arthroderma benhamiae (strain ATCC MYA-4681 / CBS 112371) (Trichophyton mentagrophytes).